A 238-amino-acid chain; its full sequence is 1-(5-phosphoribosyl)-5-[(5-phosphoribosylamino)methylideneamino] imidazole-4-carboxamide isomerase (238 aa).

Asp-8 functions as the Proton acceptor in the catalytic mechanism. The active-site Proton donor is the Asp-129.

Belongs to the HisA/HisF family.

It localises to the cytoplasm. It carries out the reaction 1-(5-phospho-beta-D-ribosyl)-5-[(5-phospho-beta-D-ribosylamino)methylideneamino]imidazole-4-carboxamide = 5-[(5-phospho-1-deoxy-D-ribulos-1-ylimino)methylamino]-1-(5-phospho-beta-D-ribosyl)imidazole-4-carboxamide. It participates in amino-acid biosynthesis; L-histidine biosynthesis; L-histidine from 5-phospho-alpha-D-ribose 1-diphosphate: step 4/9. This Brachyspira hyodysenteriae (strain ATCC 49526 / WA1) protein is 1-(5-phosphoribosyl)-5-[(5-phosphoribosylamino)methylideneamino] imidazole-4-carboxamide isomerase.